Reading from the N-terminus, the 383-residue chain is Cathepsin D (383 aa).

The N-terminal stretch at 1–18 is a signal peptide; the sequence is MKLLILTLFLATIVLAQA. Residues 19-48 constitute a propeptide that is removed on maturation; that stretch reads LTVPLNFHQASRESRRRVPQKWSNRLSALN. Positions 63–378 constitute a Peptidase A1 domain; it reads YYGAITIGTP…DFGNKQVGFA (316 aa). Asp81 is a catalytic residue. Cys94 and Cys101 are disulfide-bonded. Residues Asn118 and Asn238 are each glycosylated (N-linked (GlcNAc...) asparagine). The cysteines at positions 259 and 263 are disulfide-linked. Asp268 is an active-site residue. A disulfide bridge connects residues Cys302 and Cys339. N-linked (GlcNAc...) asparagine glycosylation is present at Asn310.

Belongs to the peptidase A1 family. As to quaternary structure, monomer. Post-translationally, N-glycosylated on 2 out of the 3 potential sites. Glycans contain sulfated Mannose.

The protein localises to the lysosome. It is found in the secreted. It catalyses the reaction Specificity similar to, but narrower than, that of pepsin A. Does not cleave the 4-Gln-|-His-5 bond in B chain of insulin.. Functionally, protease that may act during cell growth and/or development. In Dictyostelium discoideum (Social amoeba), this protein is Cathepsin D (ctsD).